Consider the following 241-residue polypeptide: Small ribosomal subunit protein uS10m (241 aa).

The transit peptide at 1-54 (MIAGVLRRSSLPSRQTLSAALASFNSCISHNLTPATTGASVSSRFTLASSPNSF) directs the protein to the mitochondrion.

This sequence belongs to the universal ribosomal protein uS10 family. In terms of assembly, component of the mitochondrial ribosome small subunit.

It localises to the mitochondrion. This chain is Small ribosomal subunit protein uS10m (RPS10), found in Arabidopsis thaliana (Mouse-ear cress).